Reading from the N-terminus, the 414-residue chain is Isocitrate dehydrogenase [NADP] cytoplasmic (414 aa).

Serine 2 carries the post-translational modification N-acetylserine. Tyrosine 42 carries the post-translational modification Phosphotyrosine. 75 to 77 lines the NADP(+) pocket; that stretch reads TIT. Position 77 (threonine 77) interacts with substrate. Lysine 81 carries the post-translational modification N6-acetyllysine. Arginine 82 serves as a coordination point for NADP(+). Residues 94–100 and arginine 109 contribute to the substrate site; that span reads SPNGTIR. Residue lysine 126 is modified to N6-succinyllysine. Residues arginine 132 and lysine 212 each contribute to the substrate site. An N6-acetyllysine mark is found at lysine 224, lysine 233, and lysine 243. A Mn(2+)-binding site is contributed by aspartate 252. Lysine 260 serves as a coordination point for NADP(+). Aspartate 275 and aspartate 279 together coordinate Mn(2+). Residue 310–315 coordinates NADP(+); it reads GTVTRH. Residue lysine 321 is modified to N6-acetyllysine. Asparagine 328 contributes to the NADP(+) binding site. Residue serine 389 is modified to Phosphoserine. Lysine 400 is modified (N6-succinyllysine).

It belongs to the isocitrate and isopropylmalate dehydrogenases family. In terms of assembly, homodimer. Mg(2+) is required as a cofactor. Requires Mn(2+) as cofactor. Post-translationally, acetylation at Lys-374 dramatically reduces catalytic activity.

Its subcellular location is the cytoplasm. It is found in the cytosol. The enzyme catalyses D-threo-isocitrate + NADP(+) = 2-oxoglutarate + CO2 + NADPH. Catalyzes the NADP(+)-dependent oxidative decarboxylation of isocitrate (D-threo-isocitrate) to 2-ketoglutarate (2-oxoglutarate), which is required by other enzymes such as the phytanoyl-CoA dioxygenase. Plays a critical role in the generation of NADPH, an important cofactor in many biosynthesis pathways. May act as a corneal epithelial crystallin and may be involved in maintaining corneal epithelial transparency. The chain is Isocitrate dehydrogenase [NADP] cytoplasmic (IDH1) from Pongo abelii (Sumatran orangutan).